A 462-amino-acid chain; its full sequence is NAD-capped RNA hydrolase NUDT12 (462 aa).

Lys-10 bears the N6-succinyllysine mark. ANK repeat units follow at residues 11 to 40 (EMIS…SLLN), 45 to 74 (NGWT…DRSL), and 78 to 98 (ARQT…ANLL). At Lys-185 the chain carries N6-succinyllysine. Residues Cys-284 and Cys-287 each contribute to the Zn(2+) site. Lys-292 bears the N6-succinyllysine mark. 2 residues coordinate Zn(2+): Cys-302 and Cys-307. Residues Tyr-318, 354-356 (AGF), Glu-370, Glu-374, and Glu-415 contribute to the substrate site. A Nudix hydrolase domain is found at 319-453 (PRVDPVVIMQ…SRAIAHQLIK (135 aa)). Mg(2+)-binding residues include Ala-354, Glu-370, Glu-374, and Glu-415. The Nudix box motif lies at 355–376 (GFIEPGETIEDAVRREVEEESG). The Microbody targeting signal signature appears at 460 to 462 (PNL).

This sequence belongs to the Nudix hydrolase family. NudC subfamily. Homodimer. Homodimerization is essential for its catalytic activity and protein stability. Interacts (via ANK repeats) with BLMH. The cofactor is Mg(2+). It depends on Zn(2+) as a cofactor. In terms of tissue distribution, expressed abundantly in the liver and kidney.

It is found in the cytoplasm. The protein localises to the peroxisome. It localises to the cytoplasmic granule. It carries out the reaction a 5'-end NAD(+)-phospho-ribonucleoside in mRNA + H2O = a 5'-end phospho-adenosine-phospho-ribonucleoside in mRNA + beta-nicotinamide D-ribonucleotide + 2 H(+). It catalyses the reaction NAD(+) + H2O = beta-nicotinamide D-ribonucleotide + AMP + 2 H(+). The catalysed reaction is NADH + H2O = reduced beta-nicotinamide D-ribonucleotide + AMP + 2 H(+). The enzyme catalyses NADPH + H2O = reduced beta-nicotinamide D-ribonucleotide + adenosine 2',5'-bisphosphate + 2 H(+). MRNA decapping enzyme that specifically removes the nicotinamide adenine dinucleotide (NAD) cap from a subset of mRNAs by hydrolyzing the diphosphate linkage to produce nicotinamide mononucleotide (NMN) and 5' monophosphate mRNA. The NAD-cap is present at the 5'-end of some RNAs; in contrast to the canonical N7 methylguanosine (m7G) cap, the NAD cap promotes mRNA decay. Preferentially acts on NAD-capped transcripts in response to nutrient stress. Also acts on free nicotinamide adenine dinucleotide molecules: hydrolyzes NAD(H) into NMN(H) and AMP, and NADPH into NMNH and 2',5'-ADP. May act to regulate the concentration of peroxisomal nicotinamide nucleotide cofactors required for oxidative metabolism in this organelle. Regulates the levels of circadian clock components PER1, PER2, PER3 and CRY2 in the liver. The polypeptide is NAD-capped RNA hydrolase NUDT12 (Mus musculus (Mouse)).